Reading from the N-terminus, the 951-residue chain is MSILPLPALPVLLTEQSQRALSRLREAAPDEPITDSDSAVLALSDFVSDALALHPDWWQGIHQQPPQPEEWQHYADWLSNALVDVNDENALMAALRRFRRHMLARIAWSQALQTSTTEHSLRQLSELAEVIIVAARSWLYQVCCHEWGTPCNAKGVAQPLLILGMGKLGGGELNFSSDIDLIFVYPENGHTQGGRRELDNAQFFTRLGQRLIKVLDQPTVDGFVYRVDMRLRPFGDSGPLVLSFAAMEDYYQEQGRDWERYAMVKARLMGGMDDAYSQELRSTLKPFVFRRYIDFSVIQSLRNMKGMIAREVRRRDLRNNIKLGAGGIREIEFITQVFQLIRGGREPGLQGRSLLPTLQHVGALGLLTPQQVLDLSTSYLFLRRLENLLQAIADEQTQTLPSDELNQQRLAWGMGFDSWDTLQSMLSQHMQAVRHVFDELIGDDAPDNNDIPEHSSYSSLWQDTLDDGDLAPLTPHLTETVREKLMRTIVEFRNDVAKRTIGPRGRDVLDQLMPCLLAEVCARQEADTVLSRLTPLLLGIVTRTTYLELLLESRAALAQLIRLCAASPMVASQLARYPLLLDELLDASTLYQPTAPGAYADELRQYLMRVPEDDEEQQLEAVRQFKQSQQLRIAAGDIGGVLPVMKVSDHLTYLAEAIIAAVVQQAWGLMVERYGQPSHLQHREGRGFAVIAYGKLGGWELGYSSDLDLVFLLDCPSDVMTDGERSIDGRQFYLRLAQRVMHLFSTRTSSGILYEVDARLRPSGAAGMLVSTVEAFDDYQRNEAWTWEHQALVRARMVYGESGVQQTFESIRRSILCAERDADTLRTEVREMREKMRQHLANKDKSRFDIKTDAGGITDIEFITQYLVLRYAAQEPRLTHWSDNVRILELMAQYGVMEESEANALKLAYVTMRNELHHLALQELSGRVSKDRFVAEREQVLVSWNKWLMGA.

The interval 1 to 445 (MSILPLPALP…VFDELIGDDA (445 aa)) is adenylyl removase. The adenylyl transferase stretch occupies residues 454–951 (HSSYSSLWQD…VSWNKWLMGA (498 aa)).

This sequence belongs to the GlnE family. Mg(2+) is required as a cofactor.

The enzyme catalyses [glutamine synthetase]-O(4)-(5'-adenylyl)-L-tyrosine + phosphate = [glutamine synthetase]-L-tyrosine + ADP. The catalysed reaction is [glutamine synthetase]-L-tyrosine + ATP = [glutamine synthetase]-O(4)-(5'-adenylyl)-L-tyrosine + diphosphate. Involved in the regulation of glutamine synthetase GlnA, a key enzyme in the process to assimilate ammonia. When cellular nitrogen levels are high, the C-terminal adenylyl transferase (AT) inactivates GlnA by covalent transfer of an adenylyl group from ATP to specific tyrosine residue of GlnA, thus reducing its activity. Conversely, when nitrogen levels are low, the N-terminal adenylyl removase (AR) activates GlnA by removing the adenylyl group by phosphorolysis, increasing its activity. The regulatory region of GlnE binds the signal transduction protein PII (GlnB) which indicates the nitrogen status of the cell. In Pectobacterium atrosepticum (strain SCRI 1043 / ATCC BAA-672) (Erwinia carotovora subsp. atroseptica), this protein is Bifunctional glutamine synthetase adenylyltransferase/adenylyl-removing enzyme.